Here is a 591-residue protein sequence, read N- to C-terminus: Alternative cytochrome c oxidase subunit 1 (591 aa).

Residues 40–60 (VIAIQYSLTASAIGLVALVLS) traverse the membrane as a helical segment. Histidine 88 provides a ligand contact to heme b. The next 11 membrane-spanning stretches (helical) occupy residues 90–110 (MIMVIYLLTALFLGGFGNYLI), 126–146 (MLSYWVYLLAVLVLASAFFVP), 172–192 (GIVLMLSSLILFIIGFTMGGL), 215–235 (VWGIFTATVMALLAFPALFVG), 274–294 (LFWFFGHPEVYIVALPAFGIV), 313–333 (VWAIVAIGALSFVVWAHHMYV), 337–357 (YPYFGFFFATTTLIIAIPTAI), 377–397 (MLFALGFIITFVNGGLTGLFL), 412–432 (VVAHFHMVMGVAPIMVVLGAI), 453–473 (FWVTFLGAYLIFFPMHYLGLL), and 498–518 (FITVVALTVGFAQMVFLFNLV). Positions 280, 284, 329, and 330 each coordinate Cu cation. Positions 280-284 (HPEVY) form a cross-link, 1'-histidyl-3'-tyrosine (His-Tyr). 2 residues coordinate heme b: histidine 415 and histidine 417.

The protein belongs to the heme-copper respiratory oxidase family. As to quaternary structure, this alternate cytochrome c oxidase consists of a subunit I and two cytochromes c. Equivalents to subunit 2 and 3 are not present in this complex.

It localises to the cell membrane. The enzyme catalyses 4 Fe(II)-[cytochrome c] + O2 + 8 H(+)(in) = 4 Fe(III)-[cytochrome c] + 2 H2O + 4 H(+)(out). Functionally, cytochrome c oxidase is the component of the respiratory chain that catalyzes the reduction of oxygen to water. Subunits 1-3 form the functional core of the enzyme complex. Co I is the catalytic subunit of the enzyme. Electrons originating in cytochrome c are transferred via the copper A center of subunit 2 and a low-spin heme of subunit 1 to the bimetallic center formed by a high-spin heme and copper B. This is Alternative cytochrome c oxidase subunit 1 (coxN) from Bradyrhizobium diazoefficiens (strain JCM 10833 / BCRC 13528 / IAM 13628 / NBRC 14792 / USDA 110).